A 453-amino-acid chain; its full sequence is uncharacterized protein (453 aa).

Residues 1–110 lie on the Cytoplasmic side of the membrane; the sequence is MIQTQSTAIK…KAILRTFNHP (110 aa). The chain crosses the membrane as a helical span at residues 111-131; that stretch reads IALTELQFLVSAVLCVGFASI. Over 132-172 the chain is Lumenal; it reads VNLFRLPRLKHTKFSKALNSFPDGILPEYLDGNFRSSILHK. A helical transmembrane segment spans residues 173 to 193; that stretch reads FLVPSKLVLMTTFPMGIFQFI. The Cytoplasmic segment spans residues 194 to 201; sequence GHITSHKA. Residues 202-222 traverse the membrane as a helical segment; the sequence is VSMIPVSLVHSVKALSPIITV. Over 223 to 234 the chain is Lumenal; sequence GYYKFFEHRYYN. The helical transmembrane segment at 235 to 255 threads the bilayer; the sequence is SMTYYTLLLLIFGVMTTCWST. The Cytoplasmic portion of the chain corresponds to 256–269; the sequence is HGSKRASDNKSGSS. The chain crosses the membrane as a helical span at residues 270–290; it reads LIGLLFAFISMIIFVAQNIFA. The Lumenal portion of the chain corresponds to 291–332; sequence KNILTIRRKVGILPSSSTDDVTSKEGQPSLDKTRFSPLQVDK. Residues 333–353 form a helical membrane-spanning segment; sequence ITILFYCSCIGFSLTLLPFLT. The Cytoplasmic segment spans residues 354-371; the sequence is GELMHGGSVINDLTLETV. Residues 372 to 392 traverse the membrane as a helical segment; sequence ALVAIHGIAHFFQAMLAFQLI. Residues 393–413 lie on the Lumenal side of the membrane; the sequence is GLLSSINYSVANIMKRIVVIS. Residues 414–434 traverse the membrane as a helical segment; sequence VALFWETKLNFFQVFGVILTI. Residues 435–453 lie on the Cytoplasmic side of the membrane; the sequence is AGLYGYDKWGLSKKDGRQA.

It belongs to the TPT transporter family.

Its subcellular location is the membrane. Its function is as follows. Able to suppress the functional loss of YPT1. May form a channel. Protein SLY41 is not essential for cell viability. The SLY41 gene is a multicopy suppressor. This is an uncharacterized protein from Saccharomyces cerevisiae (strain ATCC 204508 / S288c) (Baker's yeast).